Reading from the N-terminus, the 671-residue chain is Envelope glycoprotein (671 aa).

Residues 1 to 22 form the signal peptide; the sequence is MKPPAGMVFLWVLTSLGAGIGA. Residues 23-611 are Extracellular-facing; sequence KIVKEGNPHQ…YNKSPWFTTL (589 aa). Cystine bridges form between cysteine 121/cysteine 142 and cysteine 134/cysteine 147. 2 N-linked (GlcNAc...) asparagine; by host glycosylation sites follow: asparagine 169 and asparagine 281. The tract at residues 265 to 310 is disordered; that stretch reads VQPPRAPTQTPRVNPVNSTLSPSLGYPAPAPGPRPPYPTSPSRPGT. Residues 271–286 show a composition bias toward polar residues; it reads PTQTPRVNPVNSTLSP. Pro residues predominate over residues 292 to 305; that stretch reads APAPGPRPPYPTSP. 2 N-linked (GlcNAc...) asparagine; by host glycosylation sites follow: asparagine 326 and asparagine 331. Positions 336–339 match the CXXC motif; that stretch reads CWLC. N-linked (GlcNAc...) asparagine; by host glycans are attached at residues asparagine 355, asparagine 358, asparagine 415, and asparagine 435. Positions 473-493 are fusion peptide; it reads VSLTVALLLGGLTMGSLAAGI. Coiled coils occupy residues 501 to 550 and 560 to 596; these read IETN…LLFL and KEEC…SQQG. The immunosuppression stretch occupies residues 539 to 555; that stretch reads LQNRRGLDLLFLQEGGL. The short motif at 556-564 is the CX6CC element; the sequence is CAALKEECC. A helical transmembrane segment spans residues 612–632; it reads VSSLMVPLILLLLILMFGPCI. Cysteine 631 is lipidated: S-palmitoyl cysteine; by host. Residues 633 to 671 lie on the Cytoplasmic side of the membrane; the sequence is LNHLLQFIRERLSVIQALVLTQQYHQLRQFDAERPDAIE. The YXXL motif; contains endocytosis signal motif lies at 656–659; the sequence is YHQL.

In terms of assembly, the mature envelope protein (Env) consists of a trimer of SU-TM heterodimers attached by noncovalent interactions or by a labile interchain disulfide bond. Post-translationally, specific enzymatic cleavages in vivo yield mature proteins. Envelope glycoproteins are synthesized as an inactive precursor that is N-glycosylated and processed likely by host cell furin or by a furin-like protease in the Golgi to yield the mature SU and TM proteins. The cleavage site between SU and TM requires the minimal sequence [KR]-X-[KR]-R. The R-peptide is released from the C-terminus of the cytoplasmic tail of the TM protein upon particle formation as a result of proteolytic cleavage by the viral protease. Cleavage of this peptide is required for TM to become fusogenic. In terms of processing, the transmembrane protein is palmitoylated. The R-peptide is palmitoylated.

The protein resides in the virion membrane. The protein localises to the host cell membrane. Its function is as follows. The surface protein (SU) attaches the virus to the host cell by binding to its receptor. This interaction triggers the refolding of the transmembrane protein (TM) and is thought to activate its fusogenic potential by unmasking its fusion peptide. Fusion occurs at the host cell plasma membrane. The transmembrane protein (TM) acts as a class I viral fusion protein. Under the current model, the protein has at least 3 conformational states: pre-fusion native state, pre-hairpin intermediate state, and post-fusion hairpin state. During viral and target cell membrane fusion, the coiled coil regions (heptad repeats) assume a trimer-of-hairpins structure, positioning the fusion peptide in close proximity to the C-terminal region of the ectodomain. The formation of this structure appears to drive apposition and subsequent fusion of viral and target cell membranes. Membranes fusion leads to delivery of the nucleocapsid into the cytoplasm. This chain is Envelope glycoprotein (env), found in Felidae (cat family).